The primary structure comprises 256 residues: MPVVSLAELLESGVHFGHQTRRWNPRMAPYIYTSRNGVHIIDLVQTAQLVEQAYTYMKEASENGKHVLFVGTKRQAAGIIAQEAKRCGAFYINQRWLGGMLTNWETIKTRVERLKELEALEESGNLARRPKKEASMLRRELDKLQKYLGGIKNMRKIPDIVVIIDQRREHNAIQECQKLGIPIVSLLDTNCDPQTVDLPIPANDDAIRSIKLIVGKLADAIYAGRHGQPVDDNGDYGDFDEAIDEYADETDASESE.

A disordered region spans residues 229–256 (PVDDNGDYGDFDEAIDEYADETDASESE). Positions 232–256 (DNGDYGDFDEAIDEYADETDASESE) are enriched in acidic residues.

The protein belongs to the universal ribosomal protein uS2 family.

This is Small ribosomal subunit protein uS2 from Picosynechococcus sp. (strain ATCC 27264 / PCC 7002 / PR-6) (Agmenellum quadruplicatum).